Reading from the N-terminus, the 596-residue chain is Aspartate--tRNA(Asp/Asn) ligase (596 aa).

Glu172 is an L-aspartate binding site. The tract at residues 196–199 (QLFK) is aspartate. An L-aspartate-binding site is contributed by Arg218. ATP contacts are provided by residues 218–220 (RDE) and Gln227. His455 serves as a coordination point for L-aspartate. Glu489 serves as a coordination point for ATP. Position 496 (Arg496) interacts with L-aspartate. 541 to 544 (GLDR) serves as a coordination point for ATP.

It belongs to the class-II aminoacyl-tRNA synthetase family. Type 1 subfamily. As to quaternary structure, homodimer.

The protein resides in the cytoplasm. It catalyses the reaction tRNA(Asx) + L-aspartate + ATP = L-aspartyl-tRNA(Asx) + AMP + diphosphate. Aspartyl-tRNA synthetase with relaxed tRNA specificity since it is able to aspartylate not only its cognate tRNA(Asp) but also tRNA(Asn). Reaction proceeds in two steps: L-aspartate is first activated by ATP to form Asp-AMP and then transferred to the acceptor end of tRNA(Asp/Asn). The sequence is that of Aspartate--tRNA(Asp/Asn) ligase from Bordetella bronchiseptica (strain ATCC BAA-588 / NCTC 13252 / RB50) (Alcaligenes bronchisepticus).